The primary structure comprises 365 residues: MNTLGRFLRLTTFGESHGDMIGGVLDGMPSGIKIDYDLLENEMKRRQGGRNIFTTPRKEDDKVEITSGVFEGFSAGTPIGFLIHNQRARSKDYDNIKNLFRPSHADFTYFHKYGIRDFRGGGRSSARESAIRVAAGAFAKMLLREIGVVCESGIIKIGGIEAKNYDFNHALKSEIFALDKEQEEAQKTAIQNAIKNHDSIGGVALIRARGAKTNQKLPIGLGQGLYAKLDAKIAEAMMGLNGVKAVEIGKGVESSLLKGSEYNDLMSQKGFLSNHSGGVLGGMSNGEEIIVKVHFKPTPSIFQPQRTIDIKGNECECLLKGRHDPCIAIRGSVVCESLLSLVLADMVLLNLTSKIEYLKTIYNEN.

R46 serves as a coordination point for NADP(+). Residues R123 to S125, N241 to G242, G281, K296 to S300, and R322 contribute to the FMN site.

This sequence belongs to the chorismate synthase family. In terms of assembly, homotetramer. It depends on FMNH2 as a cofactor.

The catalysed reaction is 5-O-(1-carboxyvinyl)-3-phosphoshikimate = chorismate + phosphate. The protein operates within metabolic intermediate biosynthesis; chorismate biosynthesis; chorismate from D-erythrose 4-phosphate and phosphoenolpyruvate: step 7/7. Catalyzes the anti-1,4-elimination of the C-3 phosphate and the C-6 proR hydrogen from 5-enolpyruvylshikimate-3-phosphate (EPSP) to yield chorismate, which is the branch point compound that serves as the starting substrate for the three terminal pathways of aromatic amino acid biosynthesis. This reaction introduces a second double bond into the aromatic ring system. The chain is Chorismate synthase from Helicobacter pylori (strain J99 / ATCC 700824) (Campylobacter pylori J99).